We begin with the raw amino-acid sequence, 292 residues long: Hydroxysqualene synthase (292 aa).

It belongs to the phytoene/squalene synthase family. HpnC subfamily.

It carries out the reaction presqualene diphosphate + H2O = hydroxysqualene + diphosphate. It participates in secondary metabolite biosynthesis; hopanoid biosynthesis. In terms of biological role, involved in the biosynthesis of the hopanoid precursor squalene (SQ) from farnesyl diphosphate (FPP). Catalyzes the second step, the conversion of presqualene diphosphate (PSPP) to hydroxysqualene (HSQ). This Rhodopseudomonas palustris (strain ATCC BAA-98 / CGA009) protein is Hydroxysqualene synthase.